Here is a 329-residue protein sequence, read N- to C-terminus: Endo-beta-N-acetylglucosaminidase F3 (329 aa).

The or 40, or 41 signal peptide spans 1–39 (MKKIFFAQCSILLLMLGSCSKMTEDMTPESVNKEASVKS). Residues 48–329 (GVCIAYYITD…ANAVRDAVKN (282 aa)) form the GH18 domain. Thr-88 is a glycosylation site (O-linked (Man...) threonine). Glu-167 (proton donor) is an active-site residue.

This sequence belongs to the glycosyl hydrolase 18 family. Monomer. Carbohydrate at Thr-88 consists of (2-OMe)Man1-4GlcNAcU1-4GlcU1-4Glc1-4(2-OMe)GlcU1-4[(2-OMe)Rham1-2]Man.

The protein resides in the secreted. The catalysed reaction is an N(4)-(oligosaccharide-(1-&gt;3)-[oligosaccharide-(1-&gt;6)]-beta-D-Man-(1-&gt;4)-beta-D-GlcNAc-(1-&gt;4)-alpha-D-GlcNAc)-L-asparaginyl-[protein] + H2O = an oligosaccharide-(1-&gt;3)-[oligosaccharide-(1-&gt;6)]-beta-D-Man-(1-&gt;4)-D-GlcNAc + N(4)-(N-acetyl-beta-D-glucosaminyl)-L-asparaginyl-[protein]. In terms of biological role, endohydrolysis of the di-N-acetylchitobiosyl unit in high-mannose glycopeptides and glycoproteins. Hydrolyzes bi- and triantennary glycans. The presence of a core-bound fucose greatly augments endo F3 activity on biantennary and, presumably, triantennary oligosaccharides. The chain is Endo-beta-N-acetylglucosaminidase F3 (endOF3) from Elizabethkingia meningoseptica (Chryseobacterium meningosepticum).